A 114-amino-acid chain; its full sequence is UPF0757 protein YmgG (114 aa).

This sequence belongs to the UPF0757 family.

This Escherichia fergusonii (strain ATCC 35469 / DSM 13698 / CCUG 18766 / IAM 14443 / JCM 21226 / LMG 7866 / NBRC 102419 / NCTC 12128 / CDC 0568-73) protein is UPF0757 protein YmgG.